The following is a 341-amino-acid chain: L-threonine 3-dehydrogenase (341 aa).

Cys-38 contacts Zn(2+). Active-site charge relay system residues include Thr-40 and His-43. His-63, Glu-64, Cys-93, Cys-96, Cys-99, and Cys-107 together coordinate Zn(2+). NAD(+) is bound by residues Ile-175, Asp-195, Arg-200, 262 to 264 (LGI), and 286 to 287 (IY).

It belongs to the zinc-containing alcohol dehydrogenase family. In terms of assembly, homotetramer. Requires Zn(2+) as cofactor.

It is found in the cytoplasm. It carries out the reaction L-threonine + NAD(+) = (2S)-2-amino-3-oxobutanoate + NADH + H(+). It participates in amino-acid degradation; L-threonine degradation via oxydo-reductase pathway; glycine from L-threonine: step 1/2. In terms of biological role, catalyzes the NAD(+)-dependent oxidation of L-threonine to 2-amino-3-ketobutyrate. The chain is L-threonine 3-dehydrogenase from Shewanella sp. (strain W3-18-1).